Consider the following 188-residue polypeptide: MPKRKKQNQHQPPTQQQPPLPEREETGDEEDGSPIGPPSLLGPPPMANGKPGDPKSALHRGPPGSRGPLIPPLLSLPPPPWGRGPIRRGLGPRSSPYGRGWWGVNAEPPFPGPGHGGPTRGSFHKEQRNPRRLKSWSLIKNTCPPKDDPQVMEDKSDRPVCRHFAKKGHCRYEDLCAFYHPGVNGPPL.

Residues 1–157 are disordered; the sequence is MPKRKKQNQH…DPQVMEDKSD (157 aa). 2 stretches are compositionally biased toward pro residues: residues 35–46 and 69–82; these read IGPPSLLGPPPM and LIPPLLSLPPPPWG. Positions 83–96 are enriched in low complexity; the sequence is RGPIRRGLGPRSSP. Residues 145-157 show a composition bias toward basic and acidic residues; sequence PKDDPQVMEDKSD. The C3H1-type zinc-finger motif lies at 155–183; it reads KSDRPVCRHFAKKGHCRYEDLCAFYHPGV.

The polypeptide is Proline-rich protein 3 (PRR3) (Pan troglodytes (Chimpanzee)).